Reading from the N-terminus, the 429-residue chain is Glutamyl-tRNA reductase (429 aa).

Substrate contacts are provided by residues 50–53 (TCNR), S116, 121–123 (EPQ), and Q127. The active-site Nucleophile is C51. Residue 196–201 (GAGEMA) coordinates NADP(+).

This sequence belongs to the glutamyl-tRNA reductase family. In terms of assembly, homodimer.

The enzyme catalyses (S)-4-amino-5-oxopentanoate + tRNA(Glu) + NADP(+) = L-glutamyl-tRNA(Glu) + NADPH + H(+). It functions in the pathway porphyrin-containing compound metabolism; protoporphyrin-IX biosynthesis; 5-aminolevulinate from L-glutamyl-tRNA(Glu): step 1/2. Catalyzes the NADPH-dependent reduction of glutamyl-tRNA(Glu) to glutamate 1-semialdehyde (GSA). The protein is Glutamyl-tRNA reductase of Thermodesulfovibrio yellowstonii (strain ATCC 51303 / DSM 11347 / YP87).